Here is a 234-residue protein sequence, read N- to C-terminus: 3-deoxy-manno-octulosonate cytidylyltransferase (234 aa).

It belongs to the KdsB family.

Its subcellular location is the cytoplasm. It carries out the reaction 3-deoxy-alpha-D-manno-oct-2-ulosonate + CTP = CMP-3-deoxy-beta-D-manno-octulosonate + diphosphate. Its pathway is nucleotide-sugar biosynthesis; CMP-3-deoxy-D-manno-octulosonate biosynthesis; CMP-3-deoxy-D-manno-octulosonate from 3-deoxy-D-manno-octulosonate and CTP: step 1/1. It functions in the pathway bacterial outer membrane biogenesis; lipopolysaccharide biosynthesis. Activates KDO (a required 8-carbon sugar) for incorporation into bacterial lipopolysaccharide in Gram-negative bacteria. This Aquifex aeolicus (strain VF5) protein is 3-deoxy-manno-octulosonate cytidylyltransferase.